The primary structure comprises 474 residues: ATP synthase subunit beta (474 aa).

153–160 is an ATP binding site; that stretch reads GGAGVGKT.

It belongs to the ATPase alpha/beta chains family. In terms of assembly, F-type ATPases have 2 components, CF(1) - the catalytic core - and CF(0) - the membrane proton channel. CF(1) has five subunits: alpha(3), beta(3), gamma(1), delta(1), epsilon(1). CF(0) has three main subunits: a(1), b(2) and c(9-12). The alpha and beta chains form an alternating ring which encloses part of the gamma chain. CF(1) is attached to CF(0) by a central stalk formed by the gamma and epsilon chains, while a peripheral stalk is formed by the delta and b chains.

It is found in the cell inner membrane. The enzyme catalyses ATP + H2O + 4 H(+)(in) = ADP + phosphate + 5 H(+)(out). Produces ATP from ADP in the presence of a proton gradient across the membrane. The catalytic sites are hosted primarily by the beta subunits. This Rickettsia typhi (strain ATCC VR-144 / Wilmington) protein is ATP synthase subunit beta.